Consider the following 156-residue polypeptide: Small ribosomal subunit protein uS7 (156 aa).

Belongs to the universal ribosomal protein uS7 family. Part of the 30S ribosomal subunit. Contacts proteins S9 and S11.

One of the primary rRNA binding proteins, it binds directly to 16S rRNA where it nucleates assembly of the head domain of the 30S subunit. Is located at the subunit interface close to the decoding center, probably blocks exit of the E-site tRNA. This is Small ribosomal subunit protein uS7 from Mycolicibacterium smegmatis (strain ATCC 700084 / mc(2)155) (Mycobacterium smegmatis).